The following is a 232-amino-acid chain: Ras association domain-containing protein 3 (232 aa).

S2 carries the N-acetylserine modification. The disordered stretch occupies residues 25–46 (RAPPGKSRSGQPDVEKEKETHN). The span at 37 to 46 (DVEKEKETHN) shows a compositional bias: basic and acidic residues. Residues 78-180 (YTGFIKVQME…TLSFVLREHE (103 aa)) enclose the Ras-associating domain. In terms of domain architecture, SARAH spans 181-228 (IGEWEAFSLPELQNFLRILDKEEDEQLQSLKRRYTAYRQKLEEALGEV).

Its subcellular location is the cytoplasm. It localises to the cytoskeleton. The protein is Ras association domain-containing protein 3 (Rassf3) of Mus musculus (Mouse).